Reading from the N-terminus, the 194-residue chain is Imidazoleglycerol-phosphate dehydratase (194 aa).

It belongs to the imidazoleglycerol-phosphate dehydratase family.

The protein localises to the cytoplasm. The catalysed reaction is D-erythro-1-(imidazol-4-yl)glycerol 3-phosphate = 3-(imidazol-4-yl)-2-oxopropyl phosphate + H2O. It functions in the pathway amino-acid biosynthesis; L-histidine biosynthesis; L-histidine from 5-phospho-alpha-D-ribose 1-diphosphate: step 6/9. The chain is Imidazoleglycerol-phosphate dehydratase from Bacillus licheniformis (strain ATCC 14580 / DSM 13 / JCM 2505 / CCUG 7422 / NBRC 12200 / NCIMB 9375 / NCTC 10341 / NRRL NRS-1264 / Gibson 46).